Consider the following 136-residue polypeptide: Glycine-rich RNA-binding protein 4, mitochondrial (136 aa).

Residues methionine 1–methionine 33 constitute a mitochondrion transit peptide. The 79-residue stretch at serine 35–glutamate 113 folds into the RRM domain. Residue serine 43 is modified to Phosphoserine. The interval glutamate 113 to tyrosine 136 is disordered. Residues phenylalanine 122–tyrosine 136 are compositionally biased toward gly residues. The interval glycine 123–glycine 135 is glycine-rich (GR) required for cell-to-cell movement.

Belongs to the GR-RBP family. In terms of assembly, binds to small phloem-mobile single-stranded RNAs (ss-sRNA, e.g. small interfering RNA (siRNA) and microRNA (miRNA)) in the phloeme exudate, including viral-derived sRNA (vsiRNA). Abundantly expressed in young plants, root tips, and flowers, but weakly in mature leaves and stems, implying highly expression in actively proliferating organs.

It is found in the mitochondrion. It localises to the secreted. Its function is as follows. Possibly has a role in RNA transcription or processing during stress. Binds sequence non-specifically to RNAs and DNAs. Mediates cell-to-cell trafficking of RNA interference (RNAi) signals (small RNAs (sRNA), e.g. small interfering RNA (siRNA) and microRNA (miRNA)) which regulate growth and development, as well as responses to environmental inputs, including pathogen attack; can compromise zucchini yellow mosaic virus (ZYMV) and tobacco rattle virus (TRV) infections at the early stage. In Arabidopsis thaliana (Mouse-ear cress), this protein is Glycine-rich RNA-binding protein 4, mitochondrial.